The following is a 274-amino-acid chain: SPbeta prophage-derived uncharacterized protein YomD (274 aa).

This Bacillus subtilis (strain 168) protein is SPbeta prophage-derived uncharacterized protein YomD (yomD).